The primary structure comprises 230 residues: Ribosome maturation factor RimM (230 aa).

Residues 149 to 230 (ADEFYWVDLI…RVVVDWEADY (82 aa)) form the PRC barrel domain.

The protein belongs to the RimM family. Binds ribosomal protein uS19.

It localises to the cytoplasm. Its function is as follows. An accessory protein needed during the final step in the assembly of 30S ribosomal subunit, possibly for assembly of the head region. Essential for efficient processing of 16S rRNA. May be needed both before and after RbfA during the maturation of 16S rRNA. It has affinity for free ribosomal 30S subunits but not for 70S ribosomes. The polypeptide is Ribosome maturation factor RimM (Burkholderia mallei (strain NCTC 10229)).